A 607-amino-acid chain; its full sequence is Elongation factor 4 (607 aa).

The tr-type G domain maps to 11-193; the sequence is SKIRNFSIIA…QIVEKVPAPT (183 aa). GTP is bound by residues 23–28 and 140–143; these read DHGKST and NKID.

It belongs to the TRAFAC class translation factor GTPase superfamily. Classic translation factor GTPase family. LepA subfamily.

Its subcellular location is the cell membrane. It catalyses the reaction GTP + H2O = GDP + phosphate + H(+). In terms of biological role, required for accurate and efficient protein synthesis under certain stress conditions. May act as a fidelity factor of the translation reaction, by catalyzing a one-codon backward translocation of tRNAs on improperly translocated ribosomes. Back-translocation proceeds from a post-translocation (POST) complex to a pre-translocation (PRE) complex, thus giving elongation factor G a second chance to translocate the tRNAs correctly. Binds to ribosomes in a GTP-dependent manner. The chain is Elongation factor 4 from Bacillus cereus (strain ATCC 10987 / NRS 248).